A 508-amino-acid chain; its full sequence is Asparagine--tRNA ligase (508 aa).

Belongs to the class-II aminoacyl-tRNA synthetase family. As to quaternary structure, homodimer.

It localises to the cytoplasm. The catalysed reaction is tRNA(Asn) + L-asparagine + ATP = L-asparaginyl-tRNA(Asn) + AMP + diphosphate + H(+). This is Asparagine--tRNA ligase from Streptococcus suis (strain 05ZYH33).